Here is a 178-residue protein sequence, read N- to C-terminus: Protein GrpE (178 aa).

Residues methionine 1–valine 26 form a disordered region.

It belongs to the GrpE family. As to quaternary structure, homodimer.

Its subcellular location is the cytoplasm. Participates actively in the response to hyperosmotic and heat shock by preventing the aggregation of stress-denatured proteins, in association with DnaK and GrpE. It is the nucleotide exchange factor for DnaK and may function as a thermosensor. Unfolded proteins bind initially to DnaJ; upon interaction with the DnaJ-bound protein, DnaK hydrolyzes its bound ATP, resulting in the formation of a stable complex. GrpE releases ADP from DnaK; ATP binding to DnaK triggers the release of the substrate protein, thus completing the reaction cycle. Several rounds of ATP-dependent interactions between DnaJ, DnaK and GrpE are required for fully efficient folding. The polypeptide is Protein GrpE (Herminiimonas arsenicoxydans).